The following is a 260-amino-acid chain: Meiotic recombination protein rec6 (260 aa).

Positions 197–222 (QYSESSLLDDSQLLCSSPPVDSTEEA) are disordered. Positions 199-213 (SESSLLDDSQLLCSS) are enriched in low complexity.

Belongs to the TOP6B-like family. Component of the DSB catalytic core (DSBC) complex, composed of at least rec12, rec6 and rec14. The complex interacts with mde2.

Its function is as follows. Required for formation of the rec12-mediated double-strand breaks (DSBs) that initiate meiotic recombination. May be involved primarily in the early steps of meiotic recombination. In Schizosaccharomyces pombe (strain 972 / ATCC 24843) (Fission yeast), this protein is Meiotic recombination protein rec6.